The chain runs to 773 residues: Pentatricopeptide repeat-containing protein At1g76280 (773 aa).

PPR repeat units lie at residues 130–165 (DSRSLLFIVKSLCNGGHLDKASEFIHAVREDDRISP), 166–200 (LLPIYNFFLGACARTRSVYHASKCLELMDQRRVGK), 201–231 (NGITYVALLKLAVFQRNLSTVNDIWKHYVNH), 235–269 (DILSLRRFIWSFTRLGDLKSAYELLQHMVYLALRG), 332–369 (LRWSFNDVIHACGQSKNSELAEQLMLQLKVMQQQNLKP), 370–400 (YDSTLATVAAYCSKALQVDLAEHLLDQISEC), 402–436 (YSYPFNNLLAAYDSLDQPERAVRVLARMKELKLRP), 524–558 (GTPTYNIVLHSLLEANETDMVINIFKRMKSCGCPA), 559–593 (DVATYNIMIDCCSLIHSYKSACALVSMMIRDGFSP), 594–628 (KAVTFTALMKILLNDANFEEALNLLDQAALEEIHL), and 629–663 (DVLSYNTILRKAFEKGMIDVIEYIVEQMHREKVNP).

The protein belongs to the PPR family. P subfamily.

The protein is Pentatricopeptide repeat-containing protein At1g76280 of Arabidopsis thaliana (Mouse-ear cress).